The sequence spans 312 residues: Olfactory receptor 2H2 (312 aa).

Over 1–23 the chain is Extracellular; sequence MVNQSSTPGFLLLGFSEHPGLER. Asparagine 3 is a glycosylation site (N-linked (GlcNAc...) asparagine). A helical transmembrane segment spans residues 24-47; it reads TLFVVVLTSYLLTLVGNTLIILLS. Residues 48 to 55 are Cytoplasmic-facing; that stretch reads ALDPKLHS. The helical transmembrane segment at 56–77 threads the bilayer; that stretch reads PMYFFLSNLSFLDLCFTTSCVP. Residues 78-98 lie on the Extracellular side of the membrane; sequence QMLVNLWGPKKTISFLDCSVQ. A disulfide bond links cysteine 95 and cysteine 187. The chain crosses the membrane as a helical span at residues 99–118; it reads IFIFLSLGTTECILLTVMAF. At 119 to 137 the chain is on the cytoplasmic side; the sequence is DRYVAVCQPLHYATIIHPR. Residues 138 to 156 form a helical membrane-spanning segment; it reads LCWQLASVAWVIGLVESVV. At 157–193 the chain is on the extracellular side; that stretch reads QTPSTLHLPFCPDRQVDDFVCEVPALIRLSCEDTSYN. The helical transmembrane segment at 194-217 threads the bilayer; it reads EIQVAVASVFILVVPLSLILVSYG. Over 218-234 the chain is Cytoplasmic; sequence AITWAVLRINSAKGRRK. Residues 235 to 257 traverse the membrane as a helical segment; that stretch reads AFGTCSSHLTVVTLFYSSVIAVY. Over 258 to 270 the chain is Extracellular; the sequence is LQPKNPYAQERGK. The chain crosses the membrane as a helical span at residues 271 to 290; the sequence is FFGLFYAVGTPSLNPLIYTL. The Cytoplasmic portion of the chain corresponds to 291-312; sequence RNKEVTRAFRRLLGKEMGLTQS.

The protein belongs to the G-protein coupled receptor 1 family.

Its subcellular location is the cell membrane. In terms of biological role, odorant receptor. In Homo sapiens (Human), this protein is Olfactory receptor 2H2 (OR2H2).